The primary structure comprises 196 residues: MAGWWPALSRAARRHPWPTNVLLYGSLVSAGDALQQRLQGREANWRQTRRVATLVVTFHANFNYVWLRLLERALPGRAPHALLAKLLCDQVVGAPIAVSAFYVGMSILQGKDDIFLDLKQKFWNTYLSGLMYWPFVQLTNFSLVPVQWRTAYAGVCGFLWATFICFSQQSGDGTFKSAFTILYTKGTSATEGYPKK.

Topologically, residues 1 to 16 (MAGWWPALSRAARRHP) are cytoplasmic. Residues 16 to 55 (PWPTNVLLYGSLVSAGDALQQRLQGREANWRQTRRVATLV) form a targeting to peroxisomes region. The chain crosses the membrane as a helical span at residues 17-34 (WPTNVLLYGSLVSAGDAL). At 35–50 (QQRLQGREANWRQTRR) the chain is on the lumenal side. A helical membrane pass occupies residues 51–67 (VATLVVTFHANFNYVWL). Residues 68–90 (RLLERALPGRAPHALLAKLLCDQ) are Cytoplasmic-facing. A helical membrane pass occupies residues 91–108 (VVGAPIAVSAFYVGMSIL). Residues 109–150 (QGKDDIFLDLKQKFWNTYLSGLMYWPFVQLTNFSLVPVQWRT) lie on the Lumenal side of the membrane. A helical transmembrane segment spans residues 151-167 (AYAGVCGFLWATFICFS). The Cytoplasmic segment spans residues 168–196 (QQSGDGTFKSAFTILYTKGTSATEGYPKK).

This sequence belongs to the peroxisomal membrane protein PXMP2/4 family. As to expression, isoform 1 is detected in the kidney (at protein level). Isoform 1 and isoform 2 are expressed in the kidney, heart, liver, lung, pancreas and skeletal muscle.

Its subcellular location is the peroxisome membrane. In terms of biological role, participates in reactive oxygen species metabolism by up- or down-regulation of the genes of antioxidant enzymes. Protective against the mitochondrial apoptotic cascade. This Homo sapiens (Human) protein is Mpv17-like protein (MPV17L).